The chain runs to 496 residues: Cytochrome P450 71D181 (496 aa).

The helical; Signal-anchor for type II membrane protein transmembrane segment at Met-1 to Met-21 threads the bilayer. Heme is bound at residue Cys-435. The segment at Met-471–Ser-496 is disordered.

This sequence belongs to the cytochrome P450 family. Heme is required as a cofactor.

It is found in the membrane. The catalysed reaction is gamma-terpinene + 2 reduced [NADPH--hemoprotein reductase] + 2 O2 = carvacrol + 2 oxidized [NADPH--hemoprotein reductase] + 3 H2O + 2 H(+). The enzyme catalyses (4S)-limonene + reduced [NADPH--hemoprotein reductase] + O2 = (1S,5R)-carveol + oxidized [NADPH--hemoprotein reductase] + H2O + H(+). It catalyses the reaction (4R)-limonene + reduced [NADPH--hemoprotein reductase] + O2 = (1R,5S)-carveol + oxidized [NADPH--hemoprotein reductase] + H2O + H(+). It carries out the reaction alpha-terpinene + 2 reduced [NADPH--hemoprotein reductase] + 2 O2 = carvacrol + 2 oxidized [NADPH--hemoprotein reductase] + 3 H2O + 2 H(+). It functions in the pathway secondary metabolite biosynthesis; terpenoid biosynthesis. Functionally, involved in the biosynthesis of phenolic monoterpenes natural products thymol and carvacrol which have a broad range of biological activities acting as antimicrobial compounds, insecticides, antioxidants and pharmaceutical agents. Catalyzes the C2-hydroxylation of gamma-terpinene and alpha-terpinene to produce carvacrol. Also mediates the C6-hydroxylation of (4S)-limonene and (4R)-limonene to form carveol. The protein is Cytochrome P450 71D181 of Thymus vulgaris (Thyme).